The primary structure comprises 947 residues: Bifunctional glutamine synthetase adenylyltransferase/adenylyl-removing enzyme (947 aa).

The tract at residues 1–443 is adenylyl removase; it reads MQLPSSLVSV…VFETLIGDDE (443 aa). The interval 451 to 947 is adenylyl transferase; it reads ARHFHELWDM…VKQAWNQWFA (497 aa).

This sequence belongs to the GlnE family. Mg(2+) serves as cofactor.

The catalysed reaction is [glutamine synthetase]-O(4)-(5'-adenylyl)-L-tyrosine + phosphate = [glutamine synthetase]-L-tyrosine + ADP. It catalyses the reaction [glutamine synthetase]-L-tyrosine + ATP = [glutamine synthetase]-O(4)-(5'-adenylyl)-L-tyrosine + diphosphate. Its function is as follows. Involved in the regulation of glutamine synthetase GlnA, a key enzyme in the process to assimilate ammonia. When cellular nitrogen levels are high, the C-terminal adenylyl transferase (AT) inactivates GlnA by covalent transfer of an adenylyl group from ATP to specific tyrosine residue of GlnA, thus reducing its activity. Conversely, when nitrogen levels are low, the N-terminal adenylyl removase (AR) activates GlnA by removing the adenylyl group by phosphorolysis, increasing its activity. The regulatory region of GlnE binds the signal transduction protein PII (GlnB) which indicates the nitrogen status of the cell. In Vibrio parahaemolyticus serotype O3:K6 (strain RIMD 2210633), this protein is Bifunctional glutamine synthetase adenylyltransferase/adenylyl-removing enzyme.